The sequence spans 155 residues: Protein SprT-like (155 aa).

The region spanning 7-145 (QQHMEEVSLQ…GSCGGRLKQT (139 aa)) is the SprT-like domain. Residue His-67 participates in Zn(2+) binding. The active site involves Glu-68. Residue His-71 participates in Zn(2+) binding.

The protein belongs to the SprT family. Zn(2+) serves as cofactor.

The protein localises to the cytoplasm. The chain is Protein SprT-like from Listeria innocua serovar 6a (strain ATCC BAA-680 / CLIP 11262).